The chain runs to 1306 residues: Contactin-associated protein-like 5 (1306 aa).

Residues 1–24 form the signal peptide; it reads MDSLPRLTSVLTLLFSGLWHLGLT. The Extracellular portion of the chain corresponds to 25–1237; it reads ATNYNCDDPL…PLTNAVRSDS (1213 aa). Positions 30 to 174 constitute an F5/8 type C domain; sequence CDDPLASLLS…IGMRVEVYGC (145 aa). An intrachain disulfide couples Cys-30 to Cys-174. 2 consecutive Laminin G-like domains span residues 180–360 and 367–544; these read VADF…TFSC and PITF…IDLC. N-linked (GlcNAc...) asparagine glycans are attached at residues Asn-282, Asn-355, and Asn-496. Cys-329 and Cys-360 are joined by a disulfide. Disulfide bonds link Cys-512–Cys-544, Cys-550–Cys-561, and Cys-555–Cys-570. The region spanning 546-583 is the EGF-like 1 domain; it reads IKDRCLPNYCEHGGSCSQSWTTFYCNCSDTSYTGATCH. A glycan (N-linked (GlcNAc...) asparagine) is linked at Asn-571. An intrachain disulfide couples Cys-572 to Cys-582. A Fibrinogen C-terminal domain is found at 584-790; the sequence is NSIYEQSCEV…LRCYGDRRFW (207 aa). N-linked (GlcNAc...) asparagine glycosylation is present at Asn-622. In terms of domain architecture, Laminin G-like 3 spans 791 to 956; it reads NAVSFYTEAS…KVTSGVRPGC (166 aa). Cystine bridges form between Cys-929-Cys-956, Cys-960-Cys-973, Cys-967-Cys-982, Cys-984-Cys-994, and Cys-1164-Cys-1199. The EGF-like 2 domain occupies 957-995; sequence PGHCSSYGSICHNGGKCVEKHNGYLCDCTNSPYEGPFCK. The Laminin G-like 4 domain occupies 1013–1199; that stretch reads QEPYPVTKNI…VHGTLTESSC (187 aa). The chain crosses the membrane as a helical span at residues 1238 to 1258; it reads AVIGGVIAVVIFIIFCIIGIM. The Cytoplasmic portion of the chain corresponds to 1259–1306; the sequence is TRFLYQHKQSHRTSQMKEKEYPENLDSSFRNEIDLQNTVSECKREYFI.

The protein belongs to the neurexin family.

It is found in the membrane. May play a role in the correct development and proper functioning of the peripheral and central nervous system and be involved in cell adhesion and intercellular communication. This Homo sapiens (Human) protein is Contactin-associated protein-like 5 (CNTNAP5).